The sequence spans 145 residues: Small ribosomal subunit protein uS9 (145 aa).

Belongs to the universal ribosomal protein uS9 family.

The protein resides in the cytoplasm. The sequence is that of Small ribosomal subunit protein uS9 (RPS16) from Fritillaria agrestis (Stinkbells).